The following is a 298-amino-acid chain: Developmental pluripotency-associated protein 2 (298 aa).

A disordered region spans residues 36–61 (NMEQMEPSVSSTSDVKLEKPKKYNPG). One can recognise an SAP domain in the interval 92 to 126 (INKVCRDTLRDWCQQLGLSTNGKKIEVYLRLHRHA).

In terms of assembly, interacts with DPPA4. Expressed in embryonic stem cells. No expression is seen in 5 months embryo, mesenchymal stem cells, embryonic fibrocytes and adult tissues.

Its subcellular location is the nucleus. Binds to target gene promoters, including NKX2-5 and SYCE1, but not GATA4, and may be involved in the maintenance of the active epigenetic status of these genes. The polypeptide is Developmental pluripotency-associated protein 2 (DPPA2) (Homo sapiens (Human)).